The sequence spans 338 residues: tRNA-specific 2-thiouridylase MnmA (338 aa).

Residues 6 to 13 (AMSGGVDS) and Met32 each bind ATP. Cys92 serves as the catalytic Nucleophile. The cysteines at positions 92 and 186 are disulfide-linked. Gly116 provides a ligand contact to ATP. An interaction with tRNA region spans residues 134–136 (KDQ). Cys186 serves as the catalytic Cysteine persulfide intermediate. The segment at 288 to 289 (RY) is interaction with tRNA.

The protein belongs to the MnmA/TRMU family.

The protein resides in the cytoplasm. The catalysed reaction is S-sulfanyl-L-cysteinyl-[protein] + uridine(34) in tRNA + AH2 + ATP = 2-thiouridine(34) in tRNA + L-cysteinyl-[protein] + A + AMP + diphosphate + H(+). Its function is as follows. Catalyzes the 2-thiolation of uridine at the wobble position (U34) of tRNA, leading to the formation of s(2)U34. This Campylobacter lari (strain RM2100 / D67 / ATCC BAA-1060) protein is tRNA-specific 2-thiouridylase MnmA.